The following is a 181-amino-acid chain: NADH-quinone oxidoreductase subunit I 2 (181 aa).

2 4Fe-4S ferredoxin-type domains span residues 44–74 (LNRY…VEGA) and 90–119 (RVYQ…MTND). The [4Fe-4S] cluster site is built by cysteine 54, cysteine 57, cysteine 60, cysteine 64, cysteine 99, cysteine 102, cysteine 105, and cysteine 109.

This sequence belongs to the complex I 23 kDa subunit family. In terms of assembly, NDH-1 is composed of 14 different subunits. Subunits NuoA, H, J, K, L, M, N constitute the membrane sector of the complex. [4Fe-4S] cluster is required as a cofactor.

The protein resides in the cell membrane. The enzyme catalyses a quinone + NADH + 5 H(+)(in) = a quinol + NAD(+) + 4 H(+)(out). Its function is as follows. NDH-1 shuttles electrons from NADH, via FMN and iron-sulfur (Fe-S) centers, to quinones in the respiratory chain. The immediate electron acceptor for the enzyme in this species is believed to be menaquinone. Couples the redox reaction to proton translocation (for every two electrons transferred, four hydrogen ions are translocated across the cytoplasmic membrane), and thus conserves the redox energy in a proton gradient. This chain is NADH-quinone oxidoreductase subunit I 2, found in Mycolicibacterium paratuberculosis (strain ATCC BAA-968 / K-10) (Mycobacterium paratuberculosis).